A 756-amino-acid chain; its full sequence is Neutral ceramidase (756 aa).

Residues 1–11 (MAKRTFSTLEA) lie on the Cytoplasmic side of the membrane. A helical; Signal-anchor for type II membrane protein membrane pass occupies residues 12–32 (FLIFLLVIMTVITVALLTLLF). The Lumenal segment spans residues 33 to 756 (VTSGTIENHK…ISSPFEVVTT (724 aa)). T56, T57, T58, and T64 each carry an O-linked (GalNAc...) threonine glycan. A Ca(2+)-binding site is contributed by L110. H170 contacts Zn(2+). Residue N193 is glycosylated (N-linked (GlcNAc...) asparagine). H279 is a Zn(2+) binding site. S330 (nucleophile) is an active-site residue. 2 disulfides stabilise this stretch: C338–C352 and C345–C360. 2 N-linked (GlcNAc...) asparagine glycosylation sites follow: N407 and N444. C424 and C474 are oxidised to a cystine. Zn(2+)-binding residues include E516 and Y555. Ca(2+) is bound by residues D688, S690, and T693. Residues 746–756 (GISSPFEVVTT) are required for correct folding and localization.

It belongs to the neutral ceramidase family. May interact with CAV1. The cofactor is Zn(2+). Proteolytic cleavage of the N-terminus removes the signal-anchor and produces a soluble form of the protein. Post-translationally, N-glycosylated. Required for enzyme activity. In terms of processing, O-glycosylated. Required to retain it as a type II membrane protein at the cell surface. Phosphorylated. May prevent ubiquitination and subsequent degradation. Post-translationally, ubiquitinated, leading to its degradation by the proteasome. Ubiquitination is triggered by nitric oxide. In terms of tissue distribution, widely expressed. Strongly expressed in small intestine and to a lower extent in liver and kidney. Highly expressed in duodenum, jejunum and ileum along the brush border of the small intestine (at protein level).

The protein localises to the cell membrane. The protein resides in the membrane raft. It is found in the membrane. It localises to the caveola. Its subcellular location is the golgi apparatus membrane. The protein localises to the mitochondrion. The protein resides in the secreted. It is found in the extracellular exosome. The catalysed reaction is an N-acylsphing-4-enine + H2O = sphing-4-enine + a fatty acid. It carries out the reaction N-hexadecanoylsphing-4-enine + H2O = sphing-4-enine + hexadecanoate. It catalyses the reaction N-dodecanoylsphing-4-enine + H2O = dodecanoate + sphing-4-enine. The enzyme catalyses N-octadecanoylsphing-4-enine + H2O = sphing-4-enine + octadecanoate. The catalysed reaction is N-octanoylsphing-4-enine + H2O = octanoate + sphing-4-enine. It carries out the reaction N-(hexanoyl)sphing-4-enine + H2O = hexanoate + sphing-4-enine. It catalyses the reaction N-tetradecanoylsphing-4-enine + H2O = tetradecanoate + sphing-4-enine. The enzyme catalyses N-(9Z-octadecenoyl)-sphing-4-enine + H2O = sphing-4-enine + (9Z)-octadecenoate. The catalysed reaction is N-(15Z-tetracosenoyl)-sphing-4-enine + H2O = (15Z)-tetracosenoate + sphing-4-enine. It carries out the reaction sphinganine + hexadecanoate = N-hexadecanoylsphinganine + H2O. It catalyses the reaction N-(octadecanoyl)-sphinganine + H2O = sphinganine + octadecanoate. It participates in lipid metabolism; sphingolipid metabolism. With respect to regulation, inhibited by D-erythro-MAPP. Plasma membrane ceramidase that hydrolyzes sphingolipid ceramides into sphingosine and free fatty acids at neutral pH. Ceramides, sphingosine, and its phosphorylated form sphingosine-1-phosphate are bioactive lipids that mediate cellular signaling pathways regulating several biological processes including cell proliferation, apoptosis and differentiation. Also catalyzes the reverse reaction allowing the synthesis of ceramides from fatty acids and sphingosine. Together with sphingomyelinase, participates in the production of sphingosine and sphingosine-1-phosphate from the degradation of sphingomyelin, a sphingolipid enriched in the plasma membrane of cells. Also participates in the hydrolysis of ceramides from the extracellular milieu allowing the production of sphingosine-1-phosphate inside and outside cells. This is the case for instance with the digestion of dietary sphingolipids in the intestinal tract. The sequence is that of Neutral ceramidase (Asah2) from Mus musculus (Mouse).